Consider the following 102-residue polypeptide: Small ribosomal subunit protein uS10 (102 aa).

Belongs to the universal ribosomal protein uS10 family. Part of the 30S ribosomal subunit.

Involved in the binding of tRNA to the ribosomes. The protein is Small ribosomal subunit protein uS10 of Rhizobium etli (strain CIAT 652).